Consider the following 904-residue polypeptide: Leucine--tRNA ligase (904 aa).

The short motif at 49-59 is the 'HIGH' region element; it reads PYPSGDLHIGH. The short motif at 663 to 667 is the 'KMSKS' region element; the sequence is TMSKS. Residue Lys666 participates in ATP binding.

Belongs to the class-I aminoacyl-tRNA synthetase family.

It is found in the cytoplasm. The catalysed reaction is tRNA(Leu) + L-leucine + ATP = L-leucyl-tRNA(Leu) + AMP + diphosphate. The sequence is that of Leucine--tRNA ligase from Roseiflexus castenholzii (strain DSM 13941 / HLO8).